A 711-amino-acid chain; its full sequence is DNA ligase (711 aa).

NAD(+)-binding positions include 39 to 43, 88 to 89, and Glu119; these read DAEYD and SL. The active-site N6-AMP-lysine intermediate is Lys121. 4 residues coordinate NAD(+): Arg142, Glu179, Lys295, and Lys319. Residues Cys416, Cys419, Cys434, and Cys440 each coordinate Zn(2+). The 82-residue stretch at 630 to 711 folds into the BRCT domain; the sequence is ESVSSLAGRA…LRELLAGAGA (82 aa).

The protein belongs to the NAD-dependent DNA ligase family. LigA subfamily. Mg(2+) is required as a cofactor. Mn(2+) serves as cofactor.

It catalyses the reaction NAD(+) + (deoxyribonucleotide)n-3'-hydroxyl + 5'-phospho-(deoxyribonucleotide)m = (deoxyribonucleotide)n+m + AMP + beta-nicotinamide D-nucleotide.. Its function is as follows. DNA ligase that catalyzes the formation of phosphodiester linkages between 5'-phosphoryl and 3'-hydroxyl groups in double-stranded DNA using NAD as a coenzyme and as the energy source for the reaction. It is essential for DNA replication and repair of damaged DNA. The protein is DNA ligase of Halorhodospira halophila (strain DSM 244 / SL1) (Ectothiorhodospira halophila (strain DSM 244 / SL1)).